The following is a 467-amino-acid chain: Chromosomal replication initiator protein DnaA (467 aa).

Positions 1 to 85 (MTTTLWPQVL…LEVGEYAIES (85 aa)) are domain I, interacts with DnaA modulators. A domain II region spans residues 85–130 (SFNEPENTSVPQPLRETKAEREAAEKAASSTSKKKSDSPPKKTIKH). The disordered stretch occupies residues 87 to 129 (NEPENTSVPQPLRETKAEREAAEKAASSTSKKKSDSPPKKTIK). The span at 99–109 (RETKAEREAAE) shows a compositional bias: basic and acidic residues. The segment at 131–347 (NLNTNFTFDT…GALKRVGAFA (217 aa)) is domain III, AAA+ region. Gly175, Gly177, Lys178, and Thr179 together coordinate ATP. The interval 348–467 (QFTQQLVTVD…FNSLIRIITN (120 aa)) is domain IV, binds dsDNA.

The protein belongs to the DnaA family. In terms of assembly, oligomerizes as a right-handed, spiral filament on DNA at oriC.

It localises to the cytoplasm. Its function is as follows. Plays an essential role in the initiation and regulation of chromosomal replication. ATP-DnaA binds to the origin of replication (oriC) to initiate formation of the DNA replication initiation complex once per cell cycle. Binds the DnaA box (a 9 base pair repeat at the origin) and separates the double-stranded (ds)DNA. Forms a right-handed helical filament on oriC DNA; dsDNA binds to the exterior of the filament while single-stranded (ss)DNA is stabiized in the filament's interior. The ATP-DnaA-oriC complex binds and stabilizes one strand of the AT-rich DNA unwinding element (DUE), permitting loading of DNA polymerase. After initiation quickly degrades to an ADP-DnaA complex that is not apt for DNA replication. Binds acidic phospholipids. This Hydrogenovibrio crunogenus (strain DSM 25203 / XCL-2) (Thiomicrospira crunogena) protein is Chromosomal replication initiator protein DnaA.